We begin with the raw amino-acid sequence, 551 residues long: Solute carrier family 22 member 6 (551 aa).

Topologically, residues 1–9 (MAFNDLLKQ) are cytoplasmic. The chain crosses the membrane as a helical span at residues 10–30 (VGGVGRFQLIQVTMVVAPLLL). Over 31–135 (MASHNTLQNF…LVCSHRAFRQ (105 aa)) the chain is Extracellular. 4 N-linked (GlcNAc...) asparagine glycosylation sites follow: Asn-39, Asn-56, Asn-92, and Asn-113. The helical transmembrane segment at 136-156 (LAQSLYMVGVLLGAMVFGYLA) threads the bilayer. The Cytoplasmic portion of the chain corresponds to 157–164 (DRLGRRKV). A helical transmembrane segment spans residues 165 to 187 (LILNYLQTAVSGTCAAYAPNYTV). The Extracellular portion of the chain corresponds to 188–195 (YCVFRLLS). The helical transmembrane segment at 196–216 (GMSLASIAINCMTLNVEWMPI) threads the bilayer. Residues 217-224 (HTRAYVGT) lie on the Cytoplasmic side of the membrane. The chain crosses the membrane as a helical span at residues 225–245 (LIGYVYSLGQFLLAGIAYAVP). The Extracellular portion of the chain corresponds to 246–248 (HWR). A helical transmembrane segment spans residues 249–269 (HLQLVVSVPFFIAFIYSWFFI). Residues 270–337 (ESARWYSSSG…ELLRCPTLRH (68 aa)) are Cytoplasmic-facing. A helical membrane pass occupies residues 338-358 (LFLCLSMLWFATSFAYYGLVM). The Extracellular portion of the chain corresponds to 359 to 368 (DLQGFGVSMY). The chain crosses the membrane as a helical span at residues 369-389 (LIQVIFGAVDLPAKFVCFLVI). Residues 390 to 395 (NSMGRR) are Cytoplasmic-facing. The chain crosses the membrane as a helical span at residues 396-416 (PAQMASLLLAGICILVNGIIP). Topologically, residues 417–425 (KSHTIIRTS) are extracellular. Residues 426-446 (LAVLGKGCLASSFNCIFLYTG) traverse the membrane as a helical segment. At 447–484 (ELYPTVIRQTGLGMGSTMARVGSIVSPLVSMTAEFYPS) the chain is on the cytoplasmic side. A helical membrane pass occupies residues 485 to 505 (MPLFIFGAVPVVASAVTALLP). At 506–551 (ETLGQPLPDTVQDLKSRSRGKQNQQQQEQQKQMMPLQASTQEKNGL) the chain is on the extracellular side. The segment at 514–551 (DTVQDLKSRSRGKQNQQQQEQQKQMMPLQASTQEKNGL) is disordered. The span at 526 to 537 (KQNQQQQEQQKQ) shows a compositional bias: low complexity. The segment covering 542–551 (QASTQEKNGL) has biased composition (polar residues).

Belongs to the major facilitator (TC 2.A.1) superfamily. Organic cation transporter (TC 2.A.1.19) family. Glycosylated. Glycosylation is necessary for proper targeting of the transporter to the plasma membrane. Highly expressed in kidney; in the particular segment of the proximal tubule. In kidney, found preferentially in the cortex and outer medulla and weakly in the inner medulla. Expressed to a lower extent in brain.

The protein resides in the cell membrane. It is found in the basolateral cell membrane. Its subcellular location is the basal cell membrane. The enzyme catalyses (6R)-L-erythro-5,6,7,8-tetrahydrobiopterin(out) + a dicarboxylate(in) = (6R)-L-erythro-5,6,7,8-tetrahydrobiopterin(in) + a dicarboxylate(out). It carries out the reaction L-erythro-7,8-dihydrobiopterin(out) + a dicarboxylate(in) = L-erythro-7,8-dihydrobiopterin(in) + a dicarboxylate(out). The catalysed reaction is L-sepiapterin(out) + a dicarboxylate(in) = L-sepiapterin(in) + a dicarboxylate(out). It catalyses the reaction prostaglandin F2alpha(out) + a dicarboxylate(in) = prostaglandin F2alpha(in) + a dicarboxylate(out). The enzyme catalyses prostaglandin E2(out) + a dicarboxylate(in) = prostaglandin E2(in) + a dicarboxylate(out). It carries out the reaction 3',5'-cyclic AMP(out) + a dicarboxylate(in) = 3',5'-cyclic AMP(in) + a dicarboxylate(out). The catalysed reaction is 3',5'-cyclic GMP(out) + a dicarboxylate(in) = 3',5'-cyclic GMP(in) + a dicarboxylate(out). It catalyses the reaction urate(out) + a dicarboxylate(in) = urate(in) + a dicarboxylate(out). The enzyme catalyses kynurenate(out) + glutarate(in) = kynurenate(in) + glutarate(out). It carries out the reaction (indol-3-yl)acetate(out) + a dicarboxylate(in) = (indol-3-yl)acetate(in) + a dicarboxylate(out). The catalysed reaction is indoxyl sulfate(out) + a dicarboxylate(in) = indoxyl sulfate(in) + a dicarboxylate(out). It catalyses the reaction N-benzoylglycine(out) + a dicarboxylate(in) = N-benzoylglycine(in) + a dicarboxylate(out). The enzyme catalyses 3-carboxy-4-methyl-5-propyl-2-furanpropanoate(out) + a dicarboxylate(in) = 3-carboxy-4-methyl-5-propyl-2-furanpropanoate(in) + a dicarboxylate(out). Functionally, secondary active transporter that functions as a Na(+)-independent organic anion (OA)/dicarboxylate antiporter where the uptake of one molecule of OA into the cell is coupled with an efflux of one molecule of intracellular dicarboxylate such as alpha-ketoglutarate or glutarate. Mediates the uptake of OA across the basolateral side of proximal tubule epithelial cells, thereby contributing to the renal elimination of endogenous OA from the systemic circulation into the urine. Function as a biopterin transporters involved in the uptake and the secretion of coenzymes tetrahydrobiopterin (BH4) dihydrobiopterin (BH2) and sepiapterin to urine, thereby determining baseline levels of blood biopterins. Transports prostaglandin E2 (PGE2) and prostaglandin F2-alpha (PGF2-alpha) and may contribute to their renal excretion. Also mediates the uptake of cyclic nucleotides such as cAMP and cGMP. Involved in the transport of neuroactive tryptophan metabolites kynurenate (KYNA) and xanthurenate (XA) and may contribute to their secretion from the brain. May transport glutamate. Also involved in the disposition of uremic toxins and potentially toxic xenobiotics by the renal organic anion secretory pathway, helping reduce their undesired toxicological effects on the body. Uremic toxins include the indoxyl sulfate (IS), hippurate, indole acetate (IA), 3-carboxy-4- methyl-5-propyl-2-furanpropionate(CMPF) and urate. Xenobiotics include the mycotoxin ochratoxin (OTA). May also contribute to the transport of organic compounds in testes across the blood-testis-barrier. May also work as a bidirectional OA/dicarboxylate exchanger. This is Solute carrier family 22 member 6 from Rattus norvegicus (Rat).